A 92-amino-acid polypeptide reads, in one-letter code: Small ribosomal subunit protein uS19 (92 aa).

Belongs to the universal ribosomal protein uS19 family.

Functionally, protein S19 forms a complex with S13 that binds strongly to the 16S ribosomal RNA. The polypeptide is Small ribosomal subunit protein uS19 (Phenylobacterium zucineum (strain HLK1)).